Here is a 265-residue protein sequence, read N- to C-terminus: Phosphatidylglycerol--prolipoprotein diacylglyceryl transferase (265 aa).

4 helical membrane-spanning segments follow: residues 10–30 (VAIALGPLKVHWYGLMYLIGI), 56–76 (LVFWVALGVIAGGRLGYVLFY), 87–107 (LILQVWRGGMSFHGGLLGVLL), and 117–137 (GKGFFELMDFIAPLVPIGLGA). Residue arginine 139 participates in a 1,2-diacyl-sn-glycero-3-phospho-(1'-sn-glycerol) binding. 3 helical membrane passes run 172 to 192 (PSQLYQFALEGVALFAILWFY), 200 to 220 (MAVSGLFALCYGIFRFIVEFV), and 227 to 247 (LGYLAFGWLTMGQLLCLPMIL).

Belongs to the Lgt family.

Its subcellular location is the cell inner membrane. It carries out the reaction L-cysteinyl-[prolipoprotein] + a 1,2-diacyl-sn-glycero-3-phospho-(1'-sn-glycerol) = an S-1,2-diacyl-sn-glyceryl-L-cysteinyl-[prolipoprotein] + sn-glycerol 1-phosphate + H(+). The protein operates within protein modification; lipoprotein biosynthesis (diacylglyceryl transfer). In terms of biological role, catalyzes the transfer of the diacylglyceryl group from phosphatidylglycerol to the sulfhydryl group of the N-terminal cysteine of a prolipoprotein, the first step in the formation of mature lipoproteins. This chain is Phosphatidylglycerol--prolipoprotein diacylglyceryl transferase, found in Azotobacter vinelandii (strain DJ / ATCC BAA-1303).